The chain runs to 249 residues: Acidic leucine-rich nuclear phosphoprotein 32 family member A (249 aa).

T15 bears the Phosphothreonine mark. At S17 the chain carries Phosphoserine. LRR repeat units follow at residues 18–38 (DVKE…EGLT), 43–64 (ELEF…PKLN), 65–87 (KLKK…AEKC), and 89–110 (NLTH…EPLK). One can recognise an LRRCT domain in the interval 123 to 161 (CEVTNLNDYRENVFKLLPQLTYLDGYDRDDKEAPDSDAE). Over residues 147-156 (GYDRDDKEAP) the composition is skewed to basic and acidic residues. The disordered stretch occupies residues 147–249 (GYDRDDKEAP…EPEDEGEDDD (103 aa)). The segment at 150–174 (RDDKEAPDSDAEGYVEGLDDDEEDE) is necessary for tumor-suppressive function. Over residues 157–230 (DSDAEGYVEG…DEEDEEELGE (74 aa)) the composition is skewed to acidic residues. Residues S158 and S204 each carry the phosphoserine modification. The segment at 165-249 (EGLDDDEEDE…EPEDEGEDDD (85 aa)) is interaction with E4F1.

It belongs to the ANP32 family. As to quaternary structure, component of the SET complex, composed of at least ANP32A, APEX1, HMGB2, NME1, SET and TREX1. Directly interacts with SET. Interacts with ATXN1/SCA1. Interacts with MAP1B. Interacts with ELAVL1. Part of the INHAT (inhibitor of histone acetyltransferases) complex. Interacts with E4F1. The N-terminus is blocked. Post-translationally, phosphorylated on serine residues, at least in part by casein kinase 2/CK2. In terms of processing, some glutamate residues are glycylated by TTLL8. This modification occurs exclusively on glutamate residues and results in a glycine chain on the gamma-carboxyl group. In terms of tissue distribution, widely distributed in the central nervous system, with an abundant expression in the cerebellum.

It is found in the nucleus. It localises to the cytoplasm. The protein localises to the endoplasmic reticulum. Its function is as follows. Multifunctional protein that is involved in the regulation of many processes including tumor suppression, apoptosis, cell cycle progression or transcription. Promotes apoptosis by favouring the activation of caspase-9/CASP9 and allowing apoptosome formation. In addition, plays a role in the modulation of histone acetylation and transcription as part of the INHAT (inhibitor of histone acetyltransferases) complex. Inhibits the histone-acetyltranferase activity of EP300/CREBBP (CREB-binding protein) and EP300/CREBBP-associated factor by histone masking. Preferentially binds to unmodified histone H3 and sterically inhibiting its acetylation and phosphorylation leading to cell growth inhibition. Participates in other biochemical processes such as regulation of mRNA nuclear-to-cytoplasmic translocation and stability by its association with ELAVL1 (Hu-antigen R). Plays a role in E4F1-mediated transcriptional repression as well as inhibition of protein phosphatase 2A. This chain is Acidic leucine-rich nuclear phosphoprotein 32 family member A (ANP32A), found in Bos taurus (Bovine).